We begin with the raw amino-acid sequence, 314 residues long: Glycine--tRNA ligase alpha subunit (314 aa).

Belongs to the class-II aminoacyl-tRNA synthetase family. As to quaternary structure, tetramer of two alpha and two beta subunits.

It localises to the cytoplasm. It catalyses the reaction tRNA(Gly) + glycine + ATP = glycyl-tRNA(Gly) + AMP + diphosphate. This chain is Glycine--tRNA ligase alpha subunit, found in Mesorhizobium japonicum (strain LMG 29417 / CECT 9101 / MAFF 303099) (Mesorhizobium loti (strain MAFF 303099)).